The primary structure comprises 162 residues: Corticoliberin-1 (162 aa).

An N-terminal signal peptide occupies residues 1-24 (MKLNFLVTTVALLVAFPPPYECRA). A propeptide spanning residues 25-119 (IDSSSNQPAT…ALDSEERERR (95 aa)) is cleaved from the precursor. F160 is subject to Phenylalanine amide.

The protein belongs to the sauvagine/corticotropin-releasing factor/urotensin I family.

It localises to the secreted. Its function is as follows. This hormone from hypothalamus regulates the release of corticotropin from pituitary gland. The chain is Corticoliberin-1 (crf1) from Catostomus commersonii (White sucker).